The chain runs to 637 residues: ATP-dependent rRNA helicase SPB4 (637 aa).

A Q motif motif is present at residues 10-38; it reads WENLRVDLEPWLKDAIRSLNYPTMTPVQA. In terms of domain architecture, Helicase ATP-binding spans 41–236; the sequence is IPLLSGNKDV…RTGMNNPVKL (196 aa). 54–61 is an ATP binding site; the sequence is AVTGSGKT. The DEAD box motif lies at 184 to 187; it reads DEAD. A Helicase C-terminal domain is found at 266–444; sequence KLTTMLQMLR…KFQKKLRKYM (179 aa). Positions 528 to 597 form a coiled coil; sequence SAEKARLENL…QLEAEQERGG (70 aa). The tract at residues 554-637 is disordered; it reads LKVKNEAWSS…GVLQGSFDDL (84 aa). Composition is skewed to basic and acidic residues over residues 564–576 and 583–598; these read KTEK…ERKE and EAIE…RGGL. Residues 621 to 630 show a composition bias toward gly residues; sequence NGGGGGGGVL.

This sequence belongs to the DEAD box helicase family. DDX55/SPB4 subfamily. As to quaternary structure, component of pre-60S ribosomal complexes.

The protein localises to the nucleus. It localises to the nucleolus. It catalyses the reaction ATP + H2O = ADP + phosphate + H(+). In terms of biological role, ATP-binding RNA helicase involved in the biogenesis of 60S ribosomal subunits. Binds 90S pre-ribosomal particles and dissociates from pre-60S ribosomal particles after processing of 27SB pre-rRNA. Required for the normal formation of 18S rRNA through the processing of pre-rRNAs at sites A0, A1 and A2, and the normal formation of 25S and 5.8S rRNAs through the processing of pre-rRNAs at sites C1 and C2. The sequence is that of ATP-dependent rRNA helicase SPB4 from Lodderomyces elongisporus (strain ATCC 11503 / CBS 2605 / JCM 1781 / NBRC 1676 / NRRL YB-4239) (Yeast).